We begin with the raw amino-acid sequence, 129 residues long: uncharacterized protein (129 aa).

This is an uncharacterized protein from Methanocaldococcus jannaschii (strain ATCC 43067 / DSM 2661 / JAL-1 / JCM 10045 / NBRC 100440) (Methanococcus jannaschii).